The following is a 396-amino-acid chain: Argininosuccinate synthase (396 aa).

Residue 6–14 participates in ATP binding; sequence AYSGGLDTS. Tyr-83 serves as a coordination point for L-citrulline. An ATP-binding site is contributed by Gly-113. The L-aspartate site is built by Thr-115, Asn-119, and Asp-120. Asn-119 serves as a coordination point for L-citrulline. Residues Arg-123, Ser-171, Ser-180, Glu-256, and Tyr-268 each coordinate L-citrulline.

The protein belongs to the argininosuccinate synthase family. Type 1 subfamily. In terms of assembly, homotetramer.

The protein resides in the cytoplasm. It catalyses the reaction L-citrulline + L-aspartate + ATP = 2-(N(omega)-L-arginino)succinate + AMP + diphosphate + H(+). The protein operates within amino-acid biosynthesis; L-arginine biosynthesis; L-arginine from L-ornithine and carbamoyl phosphate: step 2/3. The polypeptide is Argininosuccinate synthase (Hyperthermus butylicus (strain DSM 5456 / JCM 9403 / PLM1-5)).